Reading from the N-terminus, the 90-residue chain is Small ribosomal subunit protein uS17 (90 aa).

It belongs to the universal ribosomal protein uS17 family. Part of the 30S ribosomal subunit.

Functionally, one of the primary rRNA binding proteins, it binds specifically to the 5'-end of 16S ribosomal RNA. The polypeptide is Small ribosomal subunit protein uS17 (Burkholderia mallei (strain NCTC 10247)).